The following is a 742-amino-acid chain: MKQAMTPEEIKEKKPYLDWSLSEHEYDYICDHLLHRLPNYTEIGLFSAMWSEHCSYKKSKPVLKLFPTKGKRVVQGPGEGAGVVDIDDGQAVVFKAESHNHPTTVEPYQGAATGVGGILRDVFSMGARPVAILDSLHFGELKDNPTMRYKMEETIKGVGDYGNCMGIPNLGGETTFDPCYNGNILLNAMNVGIMDIKDMEHGDATGVGNAVMYVGAKTGRDGIHGATFASADFSEEHATQRSAVQVGDPFMEKLLMEACLELILHHREWLVGIQDMGAAGIVSSSAEMATEGKSGMDLNLNLVPQREPNMSAYEIMLSESQERMLLCVKKGHEEDVKKIFDEYNLDAVTIGRITDDGRYVLHHDDQVVCDIPVVTLTEKVLEEKSEEKKPQRIIDVEQSENWQPEIEDAGQTLRALLNQPTIANDQFVTQQYDSQVRTDTIVGPGSDSGILRVRHTKKAIAMTTDTNGRFVYLDPKVGGQRTVLESATNIVASGALPLAITDCLNYGDPNDPEIFWELHQSCQGIADACEILETPVVSGNVSLYNENNGKAIYPSPMIGMVGLIKNYDHVIPMHMQTAGDKIYLVGKTDDDFAGSELQKMMTGKISGLPHAPNLPGIKDYLYKLQKLMAEGLVQSAHDLSEGGLGVSLAESVFDTDLGVNVKLDFNKNLLFSETPGRLIVSVAPENAAKFEQEMGDAVSEIGQVTDDKQLNISLTNDQVNEDVAKLQKIWKECIPCLMKSKA.

Residue histidine 53 is part of the active site. ATP is bound by residues tyrosine 56 and lysine 95. Glutamate 97 contacts Mg(2+). Substrate-binding positions include 98–101 (SHNH) and arginine 120. Residue histidine 99 is the Proton acceptor of the active site. Aspartate 121 contacts Mg(2+). Glutamine 245 contributes to the substrate binding site. Residue aspartate 275 coordinates Mg(2+). Residue 319–321 (ESQ) coordinates substrate. Positions 502 and 539 each coordinate ATP. Asparagine 540 lines the Mg(2+) pocket. Serine 542 contributes to the substrate binding site.

It belongs to the FGAMS family. Monomer. Part of the FGAM synthase complex composed of 1 PurL, 1 PurQ and 2 PurS subunits.

The protein resides in the cytoplasm. The enzyme catalyses N(2)-formyl-N(1)-(5-phospho-beta-D-ribosyl)glycinamide + L-glutamine + ATP + H2O = 2-formamido-N(1)-(5-O-phospho-beta-D-ribosyl)acetamidine + L-glutamate + ADP + phosphate + H(+). Its pathway is purine metabolism; IMP biosynthesis via de novo pathway; 5-amino-1-(5-phospho-D-ribosyl)imidazole from N(2)-formyl-N(1)-(5-phospho-D-ribosyl)glycinamide: step 1/2. Part of the phosphoribosylformylglycinamidine synthase complex involved in the purines biosynthetic pathway. Catalyzes the ATP-dependent conversion of formylglycinamide ribonucleotide (FGAR) and glutamine to yield formylglycinamidine ribonucleotide (FGAM) and glutamate. The FGAM synthase complex is composed of three subunits. PurQ produces an ammonia molecule by converting glutamine to glutamate. PurL transfers the ammonia molecule to FGAR to form FGAM in an ATP-dependent manner. PurS interacts with PurQ and PurL and is thought to assist in the transfer of the ammonia molecule from PurQ to PurL. This Lactobacillus acidophilus (strain ATCC 700396 / NCK56 / N2 / NCFM) protein is Phosphoribosylformylglycinamidine synthase subunit PurL.